Consider the following 275-residue polypeptide: NH(3)-dependent NAD(+) synthetase (275 aa).

Position 47–54 (47–54 (GISGGQDS)) interacts with ATP. Asp53 provides a ligand contact to Mg(2+). Arg141 contributes to the deamido-NAD(+) binding site. Thr161 serves as a coordination point for ATP. Glu166 lines the Mg(2+) pocket. Deamido-NAD(+) contacts are provided by Lys174 and Asp181. The ATP site is built by Lys190 and Thr212. A deamido-NAD(+)-binding site is contributed by 261–262 (HK).

Belongs to the NAD synthetase family. Homodimer.

The catalysed reaction is deamido-NAD(+) + NH4(+) + ATP = AMP + diphosphate + NAD(+) + H(+). The protein operates within cofactor biosynthesis; NAD(+) biosynthesis; NAD(+) from deamido-NAD(+) (ammonia route): step 1/1. Its function is as follows. Catalyzes the ATP-dependent amidation of deamido-NAD to form NAD. Uses ammonia as a nitrogen source. This Lactiplantibacillus plantarum (strain ATCC BAA-793 / NCIMB 8826 / WCFS1) (Lactobacillus plantarum) protein is NH(3)-dependent NAD(+) synthetase.